The following is a 145-amino-acid chain: D-aminoacyl-tRNA deacylase (145 aa).

The Gly-cisPro motif, important for rejection of L-amino acids signature appears at 137-138 (GP).

This sequence belongs to the DTD family. As to quaternary structure, homodimer.

It is found in the cytoplasm. It catalyses the reaction glycyl-tRNA(Ala) + H2O = tRNA(Ala) + glycine + H(+). The catalysed reaction is a D-aminoacyl-tRNA + H2O = a tRNA + a D-alpha-amino acid + H(+). Its function is as follows. An aminoacyl-tRNA editing enzyme that deacylates mischarged D-aminoacyl-tRNAs. Also deacylates mischarged glycyl-tRNA(Ala), protecting cells against glycine mischarging by AlaRS. Acts via tRNA-based rather than protein-based catalysis; rejects L-amino acids rather than detecting D-amino acids in the active site. By recycling D-aminoacyl-tRNA to D-amino acids and free tRNA molecules, this enzyme counteracts the toxicity associated with the formation of D-aminoacyl-tRNA entities in vivo and helps enforce protein L-homochirality. The sequence is that of D-aminoacyl-tRNA deacylase from Shewanella baltica (strain OS223).